A 507-amino-acid polypeptide reads, in one-letter code: ATP-dependent RNA helicase DDX47 (507 aa).

Residues 1-31 (MSETSEDEQTQLQTSDEEEDLGSEEEQEDED) show a composition bias toward acidic residues. Residues 1-58 (MSETSEDEQTQLQTSDEEEDLGSEEEQEDEDNNHKEGDSEAALSGEDDKGSEDDAAEE) are disordered. A Q motif motif is present at residues 61–89 (LTWKDLGLNEALCQACDELKWKAPSKIQR). The Helicase ATP-binding domain maps to 92–263 (IPVALQGKDV…RASLKDPVKV (172 aa)). Residue 105–112 (AETGSGKT) participates in ATP binding. Residues 211–214 (DEAD) carry the DEAD box motif. Positions 290–434 (YLVHILNELA…LYKCEEDEVM (145 aa)) constitute a Helicase C-terminal domain. Positions 426-453 (YKCEEDEVMALQERVAEAQRTAKLELKD) form a coiled coil. Basic and acidic residues predominate over residues 451–471 (LKDLEDTRGGHKRGGDTHDDS). Residues 451–507 (LKDLEDTRGGHKRGGDTHDDSENFTGARKRMKPMGGTGGGGRKSFGKKNWSKGKQKR) form a disordered region. The span at 494–507 (SFGKKNWSKGKQKR) shows a compositional bias: basic residues.

Belongs to the DEAD box helicase family. DDX47/RRP3 subfamily.

It localises to the nucleus. The protein resides in the nucleolus. It carries out the reaction ATP + H2O = ADP + phosphate + H(+). Its function is as follows. Part of a translational control module, also containing ath/DHX33 and ais/DDX52, which coordinates germline stem cell differentiation with ribosome biogenesis during oogenesis. This module allows for coregulation of ribosomal proteins and non1/GTPBP4, a p53 repressor, preventing p53 stabilization, cell cycle arrest and loss of stem cell differentiation. With atos, adjusts transcription and translation of a subset of OXPHOS genes in macrophages to increase mitochondrial bioenergetics and allow tissue invasion. This is ATP-dependent RNA helicase DDX47 from Drosophila melanogaster (Fruit fly).